The sequence spans 249 residues: UPF0524 protein C3orf70 homolog B (249 aa).

The disordered stretch occupies residues 174–230 (GPKMGHCSSPSTSEDSGINALGGHFLESCEEESEEEDELSTDGHSSPGSLWDQDECT). A compositionally biased stretch (acidic residues) spans 201–213 (SCEEESEEEDELS).

Belongs to the UPF0524 family.

Plays a role in neuronal and neurobehavioral development. Required for normal expression of the postmitotic and mature neuron markers elavl3 and eno2 and neurobehaviors related to circadian rhythm and altered light-dark conditions. This is UPF0524 protein C3orf70 homolog B from Danio rerio (Zebrafish).